Consider the following 578-residue polypeptide: Thrombomodulin (578 aa).

A signal peptide spans 1-16 (MLRVLLLGVLAPAGLG). Topologically, residues 17 to 518 (LPTPAQPQPR…SPSPVGPVHS (502 aa)) are extracellular. Residues 31 to 167 (MEHDCFQLFR…CAAEADGFLC (137 aa)) enclose the C-type lectin domain. N-linked (GlcNAc...) asparagine glycosylation occurs at Asn114. 19 disulfides stabilise this stretch: Cys137–Cys158, Cys246–Cys257, Cys253–Cys266, Cys268–Cys281, Cys289–Cys297, Cys293–Cys309, Cys311–Cys324, Cys330–Cys341, Cys337–Cys350, Cys352–Cys363, Cys370–Cys379, Cys375–Cys389, Cys391–Cys405, Cys409–Cys414, Cys418–Cys426, Cys428–Cys440, Cys446–Cys455, Cys451–Cys464, and Cys466–Cys480. 2 EGF-like domains span residues 242 to 282 (GAWD…RSCA) and 285 to 325 (AEHS…HRCE). Residue Asn300 is glycosylated (N-linked (GlcNAc...) asparagine). The EGF-like 3; calcium-binding domain maps to 326 to 364 (DVDDCIQVPSLCPQLCVNTRGAFECHCYPGYELVDNECV). Asn343 is modified ((3R)-3-hydroxyasparagine). EGF-like domains follow at residues 366–406 (PVDP…HRCQ) and 405–441 (CQMF…FMCT). Asn410 carries N-linked (GlcNAc...) asparagine glycosylation. Positions 442 to 481 (DIDECENGECPEACRNLPGTYECICGPDSPLAGQVATDCG) constitute an EGF-like 6; calcium-binding domain. The segment at 483-512 (IISDPDGDSDSGSGEPPVTPTPGVTPSPSP) is disordered. 2 O-linked (Xyl...) (chondroitin sulfate) serine glycosylation sites follow: Ser493 and Ser495. Positions 499 to 512 (PVTPTPGVTPSPSP) are enriched in pro residues. Residues 519–539 (GVLIGISIASLSLVVALLALL) traverse the membrane as a helical segment. At 540-578 (CHLRKKQGAPRAELEYKCGAPAKEVVLQHVRTEQMPQKL) the chain is on the cytoplasmic side.

In terms of assembly, interacts with ITGAL, ITGAM and ITGB2. Interacts with thrombin/F2; this interaction switches the specificity of thrombin from a procoagulant to an anticoagulant and antifibrinolytic protease. Interacts with ANGP1 and ANGP2; these interactions significantly inhibit the generation of activated PC and TAFIa/CPB2 by the thrombin/thrombomodulin complex. Interacts with PF4; this interaction enhances generation of activated protein C. Interacts with HMGB1; this interaction inhibits HMGB1 inflammatory activity. In terms of processing, N-glycosylated. Post-translationally, the iron and 2-oxoglutarate dependent 3-hydroxylation of aspartate and asparagine is (R) stereospecific within EGF domains. In terms of tissue distribution, expressed in lung, liver, spleen, kidney, pancreas and lymph node. Low expression in heart, cerebrum, urinary bladder and uterus.

Its subcellular location is the membrane. Its function is as follows. Endothelial cell receptor that plays a critical role in regulating several physiological processes including hemostasis, coagulation, fibrinolysis, inflammation, and angiogenesis. Acts as a cofactor for thrombin activation of protein C/PROC on the surface of vascular endothelial cells leading to initiation of the activated protein C anticoagulant pathway. Also accelerates the activation of the plasma carboxypeptidase B2/CPB2, which catalyzes removal of C-terminal basic amino acids from its substrates including kinins or anaphylatoxins leading to fibrinolysis inhibition. Plays critical protective roles in changing the cleavage specificity of protease-activated receptor 1/PAR1, inhibiting endothelial cell permeability and inflammation. Suppresses inflammation distinctly from its anticoagulant cofactor activity by sequestering HMGB1 thereby preventing it from engaging cellular receptors such as RAGE and contributing to the inflammatory response. This is Thrombomodulin (THBD) from Canis lupus familiaris (Dog).